The following is a 21-amino-acid chain: uncharacterized protein (21 aa).

This is an uncharacterized protein from Escherichia coli (strain K12).